We begin with the raw amino-acid sequence, 591 residues long: MAERTHACGKVTVEAVGQTVQLKGWVQKRRDLGGLIFIDLRDRTGIVQVVFNPETSKEALEVAETIRSEYVLHVEGTVVERGEGAINDNMATGRIEVQATKVNVLNAAKTTPIIIADDTDASEDVRLKYRYLDLRRPVMFNTFKMRHDVTKTIRNFLDTEEFLEVETPILTKSTPEGARDYLVPSRVHDGEFYALPQSPQLFKQLLMVGGFERYYQVARCFRDEDLRADRQPEFTQIDIEASFLTQDEILDMMERMMTKVMKDAKGVEVSAPFPRMKYADAMARYGSDKPDTRFEMELTDLSEFAAGCGFKVFTSAVESGGQVKAINAKGAASKYSRKDIDALTEFVKVYGAKGLAWLKVEEDGLKGPIAKFFGEEDANVLMNTLEATAGDLLLFVADKKSVVADSLGALRLRLGKELELIDESKFNFLWVTDWPLLEYDEDADRYFAAHHPFTMPFREDVELLETAPEKARAQAYDLVLNGYELGGGSLRIYERDVQEKMFKALGFSQEEAQEQFGFLLEAFEYGTPPHGGIALGLDRLVMLLAGRTNLRDTIAFPKTASASCLLTEAPSPVAEAQLEELNLKLNVKEEK.

Glutamate 176 is an L-aspartate binding site. An aspartate region spans residues 200–203; sequence QLFK. Arginine 222 lines the L-aspartate pocket. ATP is bound by residues 222–224 and glutamine 231; that span reads RDE. An L-aspartate-binding site is contributed by histidine 450. An ATP-binding site is contributed by glutamate 484. Residue arginine 491 coordinates L-aspartate. ATP is bound at residue 536–539; sequence GLDR.

It belongs to the class-II aminoacyl-tRNA synthetase family. Type 1 subfamily. Homodimer.

It is found in the cytoplasm. The enzyme catalyses tRNA(Asx) + L-aspartate + ATP = L-aspartyl-tRNA(Asx) + AMP + diphosphate. In terms of biological role, aspartyl-tRNA synthetase with relaxed tRNA specificity since it is able to aspartylate not only its cognate tRNA(Asp) but also tRNA(Asn). Reaction proceeds in two steps: L-aspartate is first activated by ATP to form Asp-AMP and then transferred to the acceptor end of tRNA(Asp/Asn). The polypeptide is Aspartate--tRNA(Asp/Asn) ligase (Bacillus thuringiensis (strain Al Hakam)).